The chain runs to 1163 residues: DNA-directed RNA polymerase subunit beta'' (1163 aa).

4 residues coordinate Zn(2+): Cys16, Cys87, Cys94, and Cys97.

It belongs to the RNA polymerase beta' chain family. RpoC2 subfamily. In plastids the minimal PEP RNA polymerase catalytic core is composed of four subunits: alpha, beta, beta', and beta''. When a (nuclear-encoded) sigma factor is associated with the core the holoenzyme is formed, which can initiate transcription. Zn(2+) is required as a cofactor.

It localises to the plastid. It is found in the chloroplast. It catalyses the reaction RNA(n) + a ribonucleoside 5'-triphosphate = RNA(n+1) + diphosphate. DNA-dependent RNA polymerase catalyzes the transcription of DNA into RNA using the four ribonucleoside triphosphates as substrates. The chain is DNA-directed RNA polymerase subunit beta'' (rpoC2) from Pisum sativum (Garden pea).